The following is a 153-amino-acid chain: 3-hydroxyacyl-[acyl-carrier-protein] dehydratase FabZ (153 aa).

His59 is an active-site residue.

It belongs to the thioester dehydratase family. FabZ subfamily.

It is found in the cytoplasm. It catalyses the reaction a (3R)-hydroxyacyl-[ACP] = a (2E)-enoyl-[ACP] + H2O. Functionally, involved in unsaturated fatty acids biosynthesis. Catalyzes the dehydration of short chain beta-hydroxyacyl-ACPs and long chain saturated and unsaturated beta-hydroxyacyl-ACPs. The chain is 3-hydroxyacyl-[acyl-carrier-protein] dehydratase FabZ from Thermosynechococcus vestitus (strain NIES-2133 / IAM M-273 / BP-1).